Consider the following 454-residue polypeptide: Cobyrinate a,c-diamide synthase (454 aa).

Residues 244-435 (KIAVAYDSAF…VHIHFLSNIA (192 aa)) enclose the GATase cobBQ-type domain. The Nucleophile role is filled by Cys327.

It belongs to the CobB/CbiA family. Mg(2+) is required as a cofactor.

The enzyme catalyses cob(II)yrinate + 2 L-glutamine + 2 ATP + 2 H2O = cob(II)yrinate a,c diamide + 2 L-glutamate + 2 ADP + 2 phosphate + 2 H(+). The protein operates within cofactor biosynthesis; adenosylcobalamin biosynthesis; cob(II)yrinate a,c-diamide from sirohydrochlorin (anaerobic route): step 10/10. In terms of biological role, catalyzes the ATP-dependent amidation of the two carboxylate groups at positions a and c of cobyrinate, using either L-glutamine or ammonia as the nitrogen source. The protein is Cobyrinate a,c-diamide synthase of Thermoplasma volcanium (strain ATCC 51530 / DSM 4299 / JCM 9571 / NBRC 15438 / GSS1).